The chain runs to 69 residues: U2-agatoxin-Ao1w (69 aa).

The signal sequence occupies residues 1 to 20 (MRAIISLLLISAMVFSMIEA). The propeptide occupies 21 to 34 (VPVEEGLQLFEGER). 3 cysteine pairs are disulfide-bonded: C37–C53, C44–C58, and C52–C68.

It belongs to the neurotoxin 01 (U2-agtx) family. As to expression, expressed by the venom gland.

The protein localises to the secreted. Functionally, insect active toxin causing rapid but reversible paralysis in crickets. No activity shown in mammals. Does not show effect on mammalian voltage-gated calcium channels. This chain is U2-agatoxin-Ao1w, found in Agelena orientalis (Funnel-web spider).